The sequence spans 413 residues: Multidrug resistance protein MdtA (413 aa).

Residues 1–25 (MKNKRRTYFFQFAVLAVVIATAYFA) form the signal peptide. A disordered region spans residues 394-413 (ANTYDQMDKSKPSNSKVENT).

It belongs to the membrane fusion protein (MFP) (TC 8.A.1) family. As to quaternary structure, part of a tripartite efflux system composed of MdtA, MdtB and MdtC.

It is found in the cell inner membrane. The protein is Multidrug resistance protein MdtA of Xenorhabdus bovienii (strain SS-2004) (Xenorhabdus nematophila subsp. bovienii).